Here is a 301-residue protein sequence, read N- to C-terminus: GLABROUS1 enhancer-binding protein-like 2 (301 aa).

A disordered region spans residues 1–62; it reads MATPTELGFS…NTKMASPPSN (62 aa). Over residues 44–54 the composition is skewed to basic residues; that stretch reads KKKKKKTKHNT. Positions 268 to 289 are non-canonical leucine-zipper; the sequence is LSNEWKALCVEELKLNINKLRF.

It belongs to the GeBP family. As to quaternary structure, homo- and heterodimers. Interacts with GEBP, GPL1 and GPL3. Expressed in the apical meristem and young leaf primordia. Detected in the vascular tissues of cotyledons and leaves, in hydathodes and in the septun of siliques, but not in roots.

The protein resides in the nucleus. In terms of biological role, probable transcription factor. May play redundant roles with GEBP and GPL1 in cytokinin responses by regulating the transcript levels of type-A ARR response genes. Involved in stress responses. Plays a repressive role in cell expansion by counteracting the positive role of CPR5 in this process, but does not regulate cell proliferation or endoreduplication. This is GLABROUS1 enhancer-binding protein-like 2 from Arabidopsis thaliana (Mouse-ear cress).